The sequence spans 148 residues: Hemoglobin subunit alpha (148 aa).

Ser1 carries the N-acetylserine modification. The Globin domain occupies 8–148 (DYSAADRAEL…VCHELSSRYR (141 aa)). His66 contacts O2. Residue His95 coordinates heme b.

It belongs to the globin family. In terms of assembly, heterotetramer of two alpha chains and two beta chains. Red blood cells.

Functionally, involved in oxygen transport from the lung to the various peripheral tissues. The protein is Hemoglobin subunit alpha (HBA) of Heterodontus portusjacksoni (Port Jackson shark).